The sequence spans 162 residues: Phosphopantetheine adenylyltransferase (162 aa).

Thr10 provides a ligand contact to substrate. Residues 10-11 (TF) and His18 contribute to the ATP site. Residues Lys42, Leu74, and Arg88 each coordinate substrate. ATP is bound by residues 89–91 (GLR), Glu99, and 124–130 (FSCISST).

The protein belongs to the bacterial CoaD family. As to quaternary structure, homohexamer. Mg(2+) serves as cofactor.

The protein resides in the cytoplasm. The catalysed reaction is (R)-4'-phosphopantetheine + ATP + H(+) = 3'-dephospho-CoA + diphosphate. Its pathway is cofactor biosynthesis; coenzyme A biosynthesis; CoA from (R)-pantothenate: step 4/5. Its function is as follows. Reversibly transfers an adenylyl group from ATP to 4'-phosphopantetheine, yielding dephospho-CoA (dPCoA) and pyrophosphate. The polypeptide is Phosphopantetheine adenylyltransferase (Francisella tularensis subsp. mediasiatica (strain FSC147)).